A 173-amino-acid chain; its full sequence is NADH-quinone oxidoreductase subunit I 2 (173 aa).

2 4Fe-4S ferredoxin-type domains span residues Ile-41–Ala-73 and Glu-83–Asp-112. [4Fe-4S] cluster-binding residues include Cys-53, Cys-56, Cys-59, Cys-63, Cys-92, Cys-95, Cys-98, and Cys-102. Basic and acidic residues predominate over residues Gly-153–Ala-163. Residues Gly-153–Pro-173 form a disordered region.

It belongs to the complex I 23 kDa subunit family. NDH-1 is composed of 14 different subunits. Subunits NuoA, H, J, K, L, M, N constitute the membrane sector of the complex. The cofactor is [4Fe-4S] cluster.

Its subcellular location is the cell inner membrane. The enzyme catalyses a quinone + NADH + 5 H(+)(in) = a quinol + NAD(+) + 4 H(+)(out). In terms of biological role, NDH-1 shuttles electrons from NADH, via FMN and iron-sulfur (Fe-S) centers, to quinones in the respiratory chain. The immediate electron acceptor for the enzyme in this species is believed to be ubiquinone. Couples the redox reaction to proton translocation (for every two electrons transferred, four hydrogen ions are translocated across the cytoplasmic membrane), and thus conserves the redox energy in a proton gradient. This chain is NADH-quinone oxidoreductase subunit I 2, found in Rhodopseudomonas palustris (strain ATCC BAA-98 / CGA009).